Reading from the N-terminus, the 755-residue chain is Subtilisin-like protease 4 (755 aa).

An N-terminal signal peptide occupies residues 1-20; that stretch reads MDYFLFIALTFLLTFHVHNA. Residues 41–119 form the Inhibitor I9 domain; it reads YIIHVTGPEG…ISAHPQRVLH (79 aa). In terms of domain architecture, Peptidase S8 spans 128–611; sequence FLGLQQDTGV…SGHVNPSRAN (484 aa). Asp153 serves as the catalytic Charge relay system. Asn182 carries an N-linked (GlcNAc...) asparagine glycan. His217 (charge relay system) is an active-site residue. N-linked (GlcNAc...) asparagine glycosylation is found at Asn297, Asn325, Asn393, Asn468, and Asn529. The PA domain maps to 376–461; that stretch reads PLAYAGKNGK…ATHVSYAAGI (86 aa). Ser544 acts as the Charge relay system in catalysis. N-linked (GlcNAc...) asparagine glycosylation is found at Asn706 and Asn727.

Belongs to the peptidase S8 family.

Its subcellular location is the secreted. It localises to the extracellular space. The protein resides in the apoplast. Its function is as follows. Required for arbuscular mycorrhiza (AM) development during AM symbiosis with AM fungi (e.g. Glomeromycota intraradices). The sequence is that of Subtilisin-like protease 4 from Lotus japonicus (Lotus corniculatus var. japonicus).